The following is a 651-amino-acid chain: Probable potassium transport system protein Kup (651 aa).

Transmembrane regions (helical) follow at residues 41-61, 82-102, 130-150, 163-183, 194-214, 235-255, 276-296, 309-329, 366-386, 395-415, 426-446, and 450-470; these read LVLG…IYAF, VVSL…VLFV, LILG…VITP, IVAP…LVTL, VAIV…ASGL, FLTV…LAMT, WLWI…AFIL, MIPS…TVIA, IYIP…VLGF, AYGI…YIVM, ALPI…ANII, and EGGW…WTWV.

This sequence belongs to the HAK/KUP transporter (TC 2.A.72) family.

It is found in the cell inner membrane. It catalyses the reaction K(+)(in) + H(+)(in) = K(+)(out) + H(+)(out). Its function is as follows. Transport of potassium into the cell. Likely operates as a K(+):H(+) symporter. In Brucella melitensis biotype 2 (strain ATCC 23457), this protein is Probable potassium transport system protein Kup.